Consider the following 184-residue polypeptide: Large ribosomal subunit protein uL6 (184 aa).

This sequence belongs to the universal ribosomal protein uL6 family. As to quaternary structure, part of the 50S ribosomal subunit.

In terms of biological role, this protein binds to the 23S rRNA, and is important in its secondary structure. It is located near the subunit interface in the base of the L7/L12 stalk, and near the tRNA binding site of the peptidyltransferase center. This Onion yellows phytoplasma (strain OY-M) protein is Large ribosomal subunit protein uL6.